Reading from the N-terminus, the 141-residue chain is Transcription antitermination protein NusB (141 aa).

Belongs to the NusB family.

Its function is as follows. Involved in transcription antitermination. Required for transcription of ribosomal RNA (rRNA) genes. Binds specifically to the boxA antiterminator sequence of the ribosomal RNA (rrn) operons. This Neisseria meningitidis serogroup C (strain 053442) protein is Transcription antitermination protein NusB.